The sequence spans 565 residues: Oxygen-dependent choline dehydrogenase (565 aa).

Residue 6-35 (DYIIIGAGSAGNVLATRLTEDADVSVLLLE) coordinates FAD. Residue His-475 is the Proton acceptor of the active site. The interval 541–565 (RSNAPYFVAGERPVRGQPQRAVSAA) is disordered.

The protein belongs to the GMC oxidoreductase family. FAD serves as cofactor.

The catalysed reaction is choline + A = betaine aldehyde + AH2. It carries out the reaction betaine aldehyde + NAD(+) + H2O = glycine betaine + NADH + 2 H(+). It participates in amine and polyamine biosynthesis; betaine biosynthesis via choline pathway; betaine aldehyde from choline (cytochrome c reductase route): step 1/1. Functionally, involved in the biosynthesis of the osmoprotectant glycine betaine. Catalyzes the oxidation of choline to betaine aldehyde and betaine aldehyde to glycine betaine at the same rate. The chain is Oxygen-dependent choline dehydrogenase from Ectopseudomonas mendocina (strain ymp) (Pseudomonas mendocina).